We begin with the raw amino-acid sequence, 621 residues long: DnaJ homolog subfamily C member 2 (621 aa).

Met-1 bears the N-acetylmethionine mark. Phosphoserine occurs at positions 47, 49, 60, and 63. In terms of domain architecture, J spans 88 to 161 (DHYAVLGLGH…VKRRAFNSVD (74 aa)). Residues 160 to 250 (VDPTFDNSVP…RDERRWIEKQ (91 aa)) form a ZRF1-UBD region. Residue Ser-183 is modified to Phosphoserine. Disordered stretches follow at residues 294–315 (EKKA…QRQA) and 427–453 (EEAE…GSKN). SANT domains follow at residues 449–511 (NGSK…KLDP) and 549–604 (TDFT…EMVK).

As to quaternary structure, component of ribosome-associated complex (RAC), a heterodimer composed of Hsp70/DnaK-type chaperone HSPA14 and Hsp40/DnaJ-type chaperone DNAJC2. Interacts (via ZRF1-UBD region) with ID1. Phosphorylated in M (mitotic) phase.

Its subcellular location is the nucleus. It is found in the cytoplasm. The protein resides in the cytosol. Its function is as follows. Acts both as a chaperone in the cytosol and as a chromatin regulator in the nucleus. When cytosolic, acts as a molecular chaperone: component of the ribosome-associated complex (RAC), a complex involved in folding or maintaining nascent polypeptides in a folding-competent state. In the RAC complex, stimulates the ATPase activity of the ribosome-associated pool of Hsp70-type chaperones HSPA14 that bind to the nascent polypeptide chain. When nuclear, mediates the switching from polycomb-repressed genes to an active state: specifically recruited at histone H2A ubiquitinated at 'Lys-119' (H2AK119ub), and promotes the displacement of the polycomb PRC1 complex from chromatin, thereby facilitating transcription activation. The chain is DnaJ homolog subfamily C member 2 (DNAJC2) from Macaca fascicularis (Crab-eating macaque).